A 696-amino-acid polypeptide reads, in one-letter code: MTDLSKYRNIGIFAHVDAGKTTSTERILKLTGKIHKIGDTHDGSTTTDFMEQEAERGITIQSAATTCFWNDHRLNIIDTPGHVDFTIEVYRSLKVLDGGIGVFCGSGGVEPQSETNWRYADESHVSRLIFVNKLDRMGADFYKVVDQVQNVLGATPLVMTLPIGIEEDFVGVVDVLSQQAYVWDESGQPENYEVQEIPADMVDKAAEYREMLIETALEQDEDLMMAYLEEGEEPSVEDIKRCIRKGTRDLAFFPTYCGSAYKNKGMQLILDAVVDYLPSPTEVDPQPLTDPDTGEATGEVATVSADEPLKALAFKIMDDRFGALTFIRIYSGKMKKGDTVLNSATGKTERIGRMVEMHADERNEIDSAQAGDIIAVVGMKNVQTGHTLCDPKHECTLEPMIFPEPVISIAVKPKDKGGSEKMGIAIGKMVAEDPSFQVETDEESGETILKGMGELHLDIKVDILKRTYGVELEVGAPQVAYRETITQAIEDSYTHKKQSGGSGQFAKIDYRIKPGEVGSGFTFKSTVVGGNVPKEFWPAVEKGFAGMMETGVLAGFPTLDVEVELYDGGFHAVDSSAIAYEIAAKGAFRQSMPKAGAQLLEPIMKVDVFTPEDHVGDVIGDLNRRRGMIKDQQAGTTGVRIKGDVPLSEMFGYIGTLRTMTSGRGQFSMEFSHYSPCPNNVAEQVIADVKERNAKK.

In terms of domain architecture, tr-type G spans 5-281 (SKYRNIGIFA…AVVDYLPSPT (277 aa)). Residues 14 to 21 (AHVDAGKT), 78 to 82 (DTPGH), and 132 to 135 (NKLD) each bind GTP.

The protein belongs to the TRAFAC class translation factor GTPase superfamily. Classic translation factor GTPase family. EF-G/EF-2 subfamily.

It is found in the cytoplasm. In terms of biological role, catalyzes the GTP-dependent ribosomal translocation step during translation elongation. During this step, the ribosome changes from the pre-translocational (PRE) to the post-translocational (POST) state as the newly formed A-site-bound peptidyl-tRNA and P-site-bound deacylated tRNA move to the P and E sites, respectively. Catalyzes the coordinated movement of the two tRNA molecules, the mRNA and conformational changes in the ribosome. In Vibrio parahaemolyticus serotype O3:K6 (strain RIMD 2210633), this protein is Elongation factor G 2.